The following is a 251-amino-acid chain: Cell division protein ZapD (251 aa).

This sequence belongs to the ZapD family. Interacts with FtsZ.

The protein localises to the cytoplasm. Its function is as follows. Cell division factor that enhances FtsZ-ring assembly. Directly interacts with FtsZ and promotes bundling of FtsZ protofilaments, with a reduction in FtsZ GTPase activity. The sequence is that of Cell division protein ZapD from Burkholderia multivorans (strain ATCC 17616 / 249).